The chain runs to 250 residues: uncharacterized protein (250 aa).

To class-3 of adenylyl cyclases.

This is an uncharacterized protein from Mycobacterium tuberculosis (strain ATCC 25618 / H37Rv).